The primary structure comprises 275 residues: Large ribosomal subunit protein uL2c (275 aa).

Positions 219–255 are disordered; sequence TVRGSVMNPCDHPHGGGEGRAPIGRTRPLTPWGKPAL.

Belongs to the universal ribosomal protein uL2 family. In terms of assembly, part of the 50S ribosomal subunit.

It localises to the plastid. Its subcellular location is the chloroplast. In Trieres chinensis (Marine centric diatom), this protein is Large ribosomal subunit protein uL2c (rpl2).